We begin with the raw amino-acid sequence, 639 residues long: Phosphatidylinositol 3,4,5-trisphosphate 3-phosphatase cnrN (639 aa).

The 171-residue stretch at 20 to 190 (FKSKEMDLDL…NYFKEIVSGS (171 aa)) folds into the Phosphatase tensin-type domain. The active-site Phosphocysteine intermediate is the Cys129. The C2 tensin-type domain occupies 195-350 (EFVLTFRSIE…LQMECRFQNN (156 aa)). 5 disordered regions span residues 243 to 265 (INNDNSESNNNNNNNNNNNNNNN), 395 to 429 (NNILASSAPTPLTTTTTTTTTTTTTSLPSSEHSTP), 451 to 498 (SSSG…SCSS), 519 to 567 (NNNN…RKRK), and 598 to 628 (FTKKINPNNNEENVDQKTLPILKKETNDPSE). Composition is skewed to low complexity over residues 244–265 (NNDNSESNNNNNNNNNNNNNNN), 395–424 (NNILASSAPTPLTTTTTTTTTTTTTSLPSS), 458–486 (NSSRNSNSNSRGGSSNSSSNRSSTSSRSS), and 519–554 (NNNNNNNNNNNNNNNNNNNNNKNSNNNNNESSSNSN). Polar residues predominate over residues 598–608 (FTKKINPNNNE). Basic and acidic residues predominate over residues 619 to 628 (LKKETNDPSE).

Mg(2+) serves as cofactor.

The enzyme catalyses a 1,2-diacyl-sn-glycero-3-phospho-(1D-myo-inositol-3,4,5-trisphosphate) + H2O = a 1,2-diacyl-sn-glycero-3-phospho-(1D-myo-inositol-4,5-bisphosphate) + phosphate. Functionally, protein phosphatase that negatively regulates PI3K-dependent pathways. Regulates cAMP signal transduction to control territory size. During development, a lawn of Dictyostelium cells breaks up into territories where cells aggregate in dendritic streams to form groups of 20'000 cells. In Dictyostelium discoideum (Social amoeba), this protein is Phosphatidylinositol 3,4,5-trisphosphate 3-phosphatase cnrN (cnrN).